Here is a 72-residue protein sequence, read N- to C-terminus: DNA-directed RNA polymerase subunit omega (72 aa).

The protein belongs to the RNA polymerase subunit omega family. In terms of assembly, the RNAP catalytic core consists of 2 alpha, 1 beta, 1 beta' and 1 omega subunit. When a sigma factor is associated with the core the holoenzyme is formed, which can initiate transcription.

The catalysed reaction is RNA(n) + a ribonucleoside 5'-triphosphate = RNA(n+1) + diphosphate. Promotes RNA polymerase assembly. Latches the N- and C-terminal regions of the beta' subunit thereby facilitating its interaction with the beta and alpha subunits. In Francisella tularensis subsp. tularensis (strain FSC 198), this protein is DNA-directed RNA polymerase subunit omega.